Consider the following 298-residue polypeptide: Phosphatidylserine decarboxylase proenzyme (298 aa).

Catalysis depends on charge relay system; for autoendoproteolytic cleavage activity residues aspartate 113, histidine 169, and serine 256. Serine 256 acts as the Schiff-base intermediate with substrate; via pyruvic acid; for decarboxylase activity in catalysis. Position 256 is a pyruvic acid (Ser); by autocatalysis (serine 256).

This sequence belongs to the phosphatidylserine decarboxylase family. PSD-B subfamily. Prokaryotic type II sub-subfamily. Heterodimer of a large membrane-associated beta subunit and a small pyruvoyl-containing alpha subunit. Requires pyruvate as cofactor. In terms of processing, is synthesized initially as an inactive proenzyme. Formation of the active enzyme involves a self-maturation process in which the active site pyruvoyl group is generated from an internal serine residue via an autocatalytic post-translational modification. Two non-identical subunits are generated from the proenzyme in this reaction, and the pyruvate is formed at the N-terminus of the alpha chain, which is derived from the carboxyl end of the proenzyme. The autoendoproteolytic cleavage occurs by a canonical serine protease mechanism, in which the side chain hydroxyl group of the serine supplies its oxygen atom to form the C-terminus of the beta chain, while the remainder of the serine residue undergoes an oxidative deamination to produce ammonia and the pyruvoyl prosthetic group on the alpha chain. During this reaction, the Ser that is part of the protease active site of the proenzyme becomes the pyruvoyl prosthetic group, which constitutes an essential element of the active site of the mature decarboxylase.

It is found in the cell membrane. It catalyses the reaction a 1,2-diacyl-sn-glycero-3-phospho-L-serine + H(+) = a 1,2-diacyl-sn-glycero-3-phosphoethanolamine + CO2. It functions in the pathway phospholipid metabolism; phosphatidylethanolamine biosynthesis; phosphatidylethanolamine from CDP-diacylglycerol: step 2/2. Its function is as follows. Catalyzes the formation of phosphatidylethanolamine (PtdEtn) from phosphatidylserine (PtdSer). The polypeptide is Phosphatidylserine decarboxylase proenzyme (Desulfitobacterium hafniense (strain DSM 10664 / DCB-2)).